The following is a 369-amino-acid chain: UDP-glucose 4-epimerase 4 (369 aa).

NAD(+) is bound at residue 19 to 50; sequence TVLVTGGAGYIGSHTVLQLLAAGFRVVVADSL. Serine 144 provides a ligand contact to substrate. Tyrosine 168 (proton acceptor) is an active-site residue.

This sequence belongs to the NAD(P)-dependent epimerase/dehydratase family. The cofactor is NAD(+).

The catalysed reaction is UDP-alpha-D-glucose = UDP-alpha-D-galactose. It participates in carbohydrate metabolism; galactose metabolism. Its function is as follows. Catalyzes the interconversion between UDP-glucose and UDP-galactose. This is UDP-glucose 4-epimerase 4 (UGE-4) from Oryza sativa subsp. japonica (Rice).